A 494-amino-acid polypeptide reads, in one-letter code: BTB/POZ domain and ankyrin repeat-containing protein NH5.1 (494 aa).

Residues 25 to 130 (SDVAFSVEGR…LYSGQASVAA (106 aa)) enclose the BTB domain. The disordered stretch occupies residues 60 to 94 (NHQPPPPPPPLNWPMAGGGGGGSGGGGRGGAGGGG). Residues 61 to 71 (HQPPPPPPPLN) are compositionally biased toward pro residues. Gly residues predominate over residues 75-94 (AGGGGGGSGGGGRGGAGGGG). The C2HC NPR-type zinc finger occupies 136 to 150 (LPGCGARGCWHTRCG). Residues Cys139, Cys144, His146, and Cys149 each contribute to the Zn(2+) site. 4 ANK repeats span residues 274-302 (NKIR…GLDL), 303-333 (DDAL…DVNS), 338-367 (TGKT…DPNS), and 371-405 (DGVT…KLRL). 2 disordered regions span residues 421-443 (DGAP…PRSD) and 469-494 (AAGE…NGFA).

Belongs to the plant 'ANKYRIN-BTB/POZ' family. 'NOOT-BOP-COCH-like' (NBCL) subfamily. Homodimer. Interacts with TGAL5, TGAL7, TGAL8 and TGAL9.

It is found in the nucleus. Its subcellular location is the cytoplasm. It participates in protein modification; protein ubiquitination. Functionally, may act as a substrate-specific adapter of an E3 ubiquitin-protein ligase complex (CUL3-RBX1-BTB) which mediates the ubiquitination and subsequent proteasomal degradation of target proteins. Transcriptional co-regulator involved in the promotion of leaf and floral meristem fate and determinacy. Required for the abscission of senescent organs, probably by regulating the cell wall disorganization in abscission zones (AZs, e.g. pulvini at the base of leaves). In Oryza sativa subsp. japonica (Rice), this protein is BTB/POZ domain and ankyrin repeat-containing protein NH5.1.